The chain runs to 110 residues: Large ribosomal subunit protein uL24 (110 aa).

The protein belongs to the universal ribosomal protein uL24 family. In terms of assembly, part of the 50S ribosomal subunit.

One of two assembly initiator proteins, it binds directly to the 5'-end of the 23S rRNA, where it nucleates assembly of the 50S subunit. In terms of biological role, one of the proteins that surrounds the polypeptide exit tunnel on the outside of the subunit. This chain is Large ribosomal subunit protein uL24, found in Ureaplasma parvum serovar 3 (strain ATCC 27815 / 27 / NCTC 11736).